The following is a 370-amino-acid chain: MSQIHTLTMPKWGLSMTEGRVDAWLKQEGDEINKGDEVLDVETDKISSSVEAPFSGVLRRQVAKPDETLPVGALLAVVVEGEAEESEIDAVVQRFQAEFVAEGGADQAQGPAPQKAEVGGRLLRWFELGGEGGTPLVLVHGFGGDLNNWLFNHPALAAERRVIALDLPGHGESAKALQRGDLDELSETVLALLDHLDIAKAHLAGHSMGGAVSLNVAGLAPQRVASLSLIASAGLGEAINGQYLQGFVAAANRNALKPQMVQLFADPALVTRQMLEDMLKFKRLEGVDEALRQLALAIADGDRQRHDLRSVLGQHPALVVWGGKDAIIPASHARKGPEAEVLVLPEAGHMVQMEAAEQVNQQMLAFLRKH.

In terms of domain architecture, Lipoyl-binding spans 4 to 79 (IHTLTMPKWG…PVGALLAVVV (76 aa)). The residue at position 45 (Lys45) is an N6-lipoyllysine. One can recognise an AB hydrolase-1 domain in the interval 135-355 (PLVLVHGFGG…EAGHMVQMEA (221 aa)).

The cofactor is (R)-lipoate.

It catalyses the reaction N(6)-[(R)-dihydrolipoyl]-L-lysyl-[protein] + acetyl-CoA = N(6)-[(R)-S(8)-acetyldihydrolipoyl]-L-lysyl-[protein] + CoA. Its pathway is ketone degradation; acetoin degradation. This chain is Dihydrolipoyllysine-residue acetyltransferase component of acetoin cleaving system (acoC), found in Pseudomonas putida (Arthrobacter siderocapsulatus).